Here is a 493-residue protein sequence, read N- to C-terminus: MSIYQSIQDFISLALQNGTIEPLDELYHRNQLLHFLGLNDWAEVDKEAHEKDSLILMDQLLAIANENNVIEKGQDEFYEAALMNFITPRPSKINQDFWEKYKTSPDAATQYFYELAQQVNQVKTRDITRNIAFSHLTKYGKLEITINLSKPEKDPKAIAAAKLVKASSYPACQLCLENEGFYGIGNKPARSNHRIIQVSINGEDWGFQYSPYAYFNEHSILLNAKHQPMEINKRAFDNLLGFLDQFPDYMIGSNADLPIVGGSILTHDHYQAGRYEFPMAKAELREEIKLQQFPEVSCGIVNWPMSVLRLSSKNQVELSKAADELLKKWQVYSDESLQIKAKSADGKLHHTITPIARIREGKYELDLVLRDNNTSEIYPDGIFHPHPALHHIKKENIGLIEVMGLAILPARLKTELLEVEKYLLNQENEMSEIHKPWAEELKETEYFSKETVHETVQEAVGEVFEQVLKDAGVFKDNEVGQKGFYEFINFVNN.

This sequence belongs to the galactose-1-phosphate uridylyltransferase type 2 family.

It localises to the cytoplasm. It catalyses the reaction alpha-D-galactose 1-phosphate + UDP-alpha-D-glucose = alpha-D-glucose 1-phosphate + UDP-alpha-D-galactose. It participates in carbohydrate metabolism; galactose metabolism. The sequence is that of Galactose-1-phosphate uridylyltransferase (galT) from Lactococcus lactis subsp. lactis (strain IL1403) (Streptococcus lactis).